Reading from the N-terminus, the 555-residue chain is Galectin-3-binding protein (555 aa).

The signal sequence occupies residues 1 to 18 (MAPLRLFWIWLLVVGTRG). In terms of domain architecture, SRCR spans 24–124 (MRLADGGSAN…HDKDASVICT (101 aa)). Cystine bridges form between Cys49-Cys113, Cys62-Cys123, and Cys93-Cys103. N-linked (GlcNAc...) asparagine glycosylation is present at Asn69. Asn125 is a glycosylation site (N-linked (GlcNAc...) asparagine). In terms of domain architecture, BTB spans 153–221 (CDLFITVKVR…LYSRRIDVSL (69 aa)). The region spanning 260-360 (PLELYAYALA…MPPQDLFSLQ (101 aa)) is the BACK domain. Asn362, Asn398, and Asn550 each carry an N-linked (GlcNAc...) asparagine glycan.

In terms of assembly, homodimers and homomultimers. The multimers form ring-like structures with a diameter of 30-40 nm. Binds LGALS1 and LGALS3. Binds ITGB1, COL4A1, COL5A1, COL6A1, FN1 and NID. Interacts with the gamma-tubulin ring complex (gamma-TuRC), composed of gamma-tubulin, TUBGCP2, TUBGCP3, TUBGCP4, TUBGCP5 and TUBGCP6. The unglycosylated form interacts with PDE4DIP; this interaction, which is PDE4DIP isoform-specific, may connect a pericentrosomal complex, made of AKAP9, CDK5RAP2, EB1/MAPRE1 and PDE4DIP, to the gamma-tubulin ring complex (gamma-TuRC) to promote microtubule assembly and acetylation.

It is found in the secreted. The protein localises to the extracellular space. Its subcellular location is the extracellular matrix. Its function is as follows. Promotes integrin-mediated cell adhesion. May stimulate host defense against viruses and tumor cells. The protein is Galectin-3-binding protein (LGALS3BP) of Bos taurus (Bovine).